We begin with the raw amino-acid sequence, 779 residues long: Phosphoribosylformylglycinamidine synthase subunit PurL (779 aa).

The active site involves histidine 52. ATP-binding residues include tyrosine 55 and lysine 94. Glutamate 96 is a binding site for Mg(2+). Residues serine 97–histidine 100 and arginine 119 each bind substrate. The active-site Proton acceptor is histidine 98. A Mg(2+)-binding site is contributed by aspartate 120. A substrate-binding site is contributed by glutamine 243. Residue aspartate 271 coordinates Mg(2+). Glutamate 315–glutamine 317 contacts substrate. ATP is bound by residues asparagine 523 and glycine 560. Asparagine 561 contacts Mg(2+). A substrate-binding site is contributed by serine 563.

It belongs to the FGAMS family. As to quaternary structure, monomer. Part of the FGAM synthase complex composed of 1 PurL, 1 PurQ and 2 PurS subunits.

It localises to the cytoplasm. It catalyses the reaction N(2)-formyl-N(1)-(5-phospho-beta-D-ribosyl)glycinamide + L-glutamine + ATP + H2O = 2-formamido-N(1)-(5-O-phospho-beta-D-ribosyl)acetamidine + L-glutamate + ADP + phosphate + H(+). It functions in the pathway purine metabolism; IMP biosynthesis via de novo pathway; 5-amino-1-(5-phospho-D-ribosyl)imidazole from N(2)-formyl-N(1)-(5-phospho-D-ribosyl)glycinamide: step 1/2. Functionally, part of the phosphoribosylformylglycinamidine synthase complex involved in the purines biosynthetic pathway. Catalyzes the ATP-dependent conversion of formylglycinamide ribonucleotide (FGAR) and glutamine to yield formylglycinamidine ribonucleotide (FGAM) and glutamate. The FGAM synthase complex is composed of three subunits. PurQ produces an ammonia molecule by converting glutamine to glutamate. PurL transfers the ammonia molecule to FGAR to form FGAM in an ATP-dependent manner. PurS interacts with PurQ and PurL and is thought to assist in the transfer of the ammonia molecule from PurQ to PurL. The sequence is that of Phosphoribosylformylglycinamidine synthase subunit PurL from Prochlorococcus marinus (strain MIT 9301).